Consider the following 193-residue polypeptide: N-(5'-phosphoribosyl)anthranilate isomerase (193 aa).

The protein belongs to the TrpF family.

The enzyme catalyses N-(5-phospho-beta-D-ribosyl)anthranilate = 1-(2-carboxyphenylamino)-1-deoxy-D-ribulose 5-phosphate. Its pathway is amino-acid biosynthesis; L-tryptophan biosynthesis; L-tryptophan from chorismate: step 3/5. This is N-(5'-phosphoribosyl)anthranilate isomerase from Streptococcus mutans serotype c (strain ATCC 700610 / UA159).